The following is a 240-amino-acid chain: Vesicle-associated membrane protein 727 (240 aa).

Topologically, residues 1–215 are cytoplasmic; it reads MSQKGLIYSF…MWLQSLQMKL (215 aa). In terms of domain architecture, Longin spans 6–133; that stretch reads LIYSFVAKGT…NLDREFGPIL (128 aa). One can recognise a v-SNARE coiled-coil homology domain in the interval 149 to 209; the sequence is KLSKLKAQIT…RQLRRKMWLQ (61 aa). A helical; Anchor for type IV membrane protein membrane pass occupies residues 216–236; the sequence is MVAGAVFSFILIVWVVACGGF. At 237-240 the chain is on the vesicular side; sequence KCSS.

It belongs to the synaptobrevin family. As to quaternary structure, interacts with subunits of the class C core vacuole/endosome tethering (CORVET) complex including VPS11, VCL1, VPS18, VPS33, VPS3 and VPS8. Highly expressed in flowers. Detected in leaves, stems and roots.

The protein resides in the early endosome membrane. The protein localises to the endosome membrane. Involved in the targeting and/or fusion of transport vesicles to their target membrane. The polypeptide is Vesicle-associated membrane protein 727 (VAMP727) (Arabidopsis thaliana (Mouse-ear cress)).